A 53-amino-acid chain; its full sequence is UPF0391 membrane protein Bxeno_A1464 (53 aa).

Transmembrane regions (helical) follow at residues 5-25 (AAIF…GIAA) and 30-50 (IAKV…LMGV).

It belongs to the UPF0391 family.

It localises to the cell membrane. This chain is UPF0391 membrane protein Bxeno_A1464, found in Paraburkholderia xenovorans (strain LB400).